The primary structure comprises 145 residues: Bacilliredoxin GK1781 (145 aa).

This sequence belongs to the bacilliredoxin family.

The sequence is that of Bacilliredoxin GK1781 from Geobacillus kaustophilus (strain HTA426).